Reading from the N-terminus, the 2373-residue chain is MAPHNSLDDTPLSSRTFIQEPIAVVGIACRLPGHSSTPKKLWDFLERGGIAANDTPSTRFNLAAHHDGSKKPKTMRTPGGMFIEDADPRDFDAGFFGISGADAAAMDPQQRQLMEVVYECLENSGVPFEKLYGAQVACHVGSYAVDYDAIQARDPEDRAPGAVVGIGRAMLSNRISHFFNFKGPSMTIDTACSGSLVGLDVACRYLHTGEVDGAIIGGANMYFSPEHNLNTGAMSVANSLSGRCHTFDVKADGYCKAEAINCVYLKRLSDAVRDGDPIRAVIRGSATNSDGNTPGIASPNSAAQAAAIRSAYANAGITNLNDTSYLEFHGTGTQAGDPLEAGGVASVFSASRKPEAPLYIGSVKSNIGHSEPAAGISGLIKAILSIEKDLIPGNPTFITPTPKIDFEGLKLQPSRANRRWPAAPFKRASVNSFGYGGSNAHVIVEEPKVLLPDMESTYVSSYQTEADLFADDEEVAGGRLQLLVLSANDEASLRANATTLKNYLTNPNVKISLGDLSHTLSERRSHHFHRGYLITDKASIDENALVIGKKSTNEPRVGFIFTGQGAQWPQMGKAIIDTFPEARAVVLELDEFLQSSSLPPSWSLLGELTEPREAEHLRKPEFSQPLVTALQIALFDILQRWGISPRAVAGHSSGEIAAAYAAGLLSKKAAIRAAYYRGQAAALAEKGTADQNQQAFGMMATGIGAEGITPYLQGLGQSVQIACYNSPSSLTLSGTVDALAKVQKQLSEDSIFARMLQVNLAYHSTFMREISQGYTDLLNKDFEHLPFKQDSVRMFSSVTGEQLAGPTDSEYWKSNMVCPVRFDAALSNMLTASDAPDFLIELGPAGALKGPISQVLKSLEGTKAQYTSAMARGAADMQSIFAVAGSLYVAGGKVDLAQVNKVDGIKPKVVIDLPNYSWNHSTKYWYESESSKDWRNRLFPPHDLLGSKVLGSPWRSPAFMRSLNVQDLPWIADHKMGPDTVFPATGYISMAMEAIYQRSEALHMLEGEKKVENPRYRLRDVQFKKALVLPDNQSTRMSLTLSAYTGVGDWFEFKVSSLAGTTWIEHVRGLIRIDEDVPQVASAEEIKPLSHQVDASLWHKCMLDAGYSFGPKFLKQLQIEARPGSRRSRSILGLEVPESKYPQSKYPMHPAAMDGCFQTCAPSLWKGNRHAVNAVLVPAMIDSLTITSSKADRGLSLTSAAYVGLGRPTDNKNYMSNASVYDPETGNLLLRLSGLRYTRIDTGPSVYDAHTFSALISKPDVSLLSSQSLENLAEREQGLNDRSFGVATELVRLAAHKKPAQRVLELNFVPGLSQSIWASAIEGQDNIGKTYRQFVYRLTDPKALVEAGQQYTSEKMEISLLDPEGMTLAEDEFDLVVVRLSPAADNVEHVATQLKKVVKEGGQVLFIRQRSVQNSEVIVNGEAEQFDNGSYADLLKSAGLTFAGHVAFEEGNEFASLSLCRVQPEPDCTGKDVAIYHFVEPSTSALKVITALKARGWNVTTYRAEEASTSPKRFLVLDELDTALLPTLSPAHWDSLKILLSLDKRVLWVTNGSQTVISEPNKAMIHGLGRTVRAEDPLVQLTTLDVSASSTDATVDSVEVILERLALPEVFHHVESEFIERNGLLHINRIQPDDQVNAVASDSYEGSEPVEQSLHDSPNMIRLRCERVGTTDSLIYSEVSPYELPLDDNKVEVEVYAAGLNYKDVVITMGIVPENEHILGLEGAGIVRRLGKNVHKVRKLDIGQRVLVFKKGAFANRVHAEAERVYPIQDSMTFEETCTLASSYLTGIHSLFNLADTKAGSKVLIHSASGGLGLACIQLCQYVGAEVFATCGNKEKRDFLVKHAGIPADHIFNSRDTSFGAAIMAATNGYGVDTILNSLTGDLLDESWRCIAAEGTMVELGKRDMLDRKGLSMEPFGRNASYRCFDMGHDIVSDAMINNLLKRLFALLEAGHVKPVHVATTFGWDNVSGAMRYMRSANHIGKIVISSGDKPIIVPVRPSRAPLQLRGEAGYLLIGGLKGLCGSVAVNLASLGAKHIVVMARSGYDDEVSQRVITDLAALGCTITLGQGDVSKADDVRRVIKQSPVPIGGVIQGAMVLRDRVFTDMSIEEYHAAVDCKVAGTWNIHNALIEENMKVEFFTMLSSVSGVVGQKGQANYAAANAFLDAFAIYRHNLGLAGNSVDLGAIQDVGYMSHHVDLLENLSSDAWTPINEALMLKIVEFSLKQQLTPISKASAGQLITSIAVPQRENSSLLRDARFSTLSFSDGEDVGAGSDGKDAGIQALQLLVKNKAAVSAIHDAVIDVTVRQFTTMLSLSEPMEPAKAPSSYGLDSLAAVEFRNWVRLELKAEVTTLDIISATSLEQLAQKIVARLTAV.

A Ketosynthase family 3 (KS3) domain is found at Gln-19 to Glu-446. Residues Cys-192, His-329, and His-369 each act as for beta-ketoacyl synthase activity in the active site. Residues Ile-560–Ala-874 form a malonyl-CoA:ACP transacylase (MAT) domain region. Residue Ser-652 is the For malonyltransferase activity of the active site. The tract at residues His-942–Pro-1078 is N-terminal hotdog fold. The segment at His-942–Asp-1241 is dehydratase (DH) domain. A PKS/mFAS DH domain is found at His-942–Val-1246. The Proton acceptor; for dehydratase activity role is filled by His-974. The segment at Ser-1090–Val-1246 is C-terminal hotdog fold. Asp-1154 acts as the Proton donor; for dehydratase activity in catalysis. The enoyl reductase (ER) domain stretch occupies residues Gly-1669–Ile-1985. The ketoreductase (KR) domain stretch occupies residues Gly-2010–Asp-2187. One can recognise a Carrier domain in the interval Ala-2294 to Leu-2370. Ser-2330 is modified (O-(pantetheine 4'-phosphoryl)serine).

The cofactor is pantetheine 4'-phosphate.

It participates in mycotoxin biosynthesis. Highly reducing polyketide synthase; part of the gene cluster that mediates the biosynthesis of brefeldin A (BFA), a protein transport inhibitor that shows antiviral, antifungal, and antitumor properties. The proposed biosynthesis of BFA involves formation of an acyclic polyketide chain that is differentially tailored throughout the backbone. The highly reducing polyketide synthase Bref-PKS is proposed to synthesize the precisely reduced octaketide precursor, which could then be directly offloaded by the thiohydrolase enzyme Bref-TH followed by a cytochrome P450 monooxygenase-mediated formation of the cyclopentane ring and macrocyclization to afford 7-deoxy BFA. Alternatively, the first ring annulation can also occur on the ACP-tethered intermediate before the thiohydrolase release and lactonization. The C7-hydroxylation by another cytochrome P450 monooxygenase is believed to be the final step in the process to obtain the final structure of BFA. In addition to the HRPKS Bref-PKS and the thiohydrolase Bref-TH, the brefeldin A biosynthesis cluster contains 4 cytochrome p450 monooxygenases (called orf3 to orf6), as well a the probable cluster-specific transcription regulator orf8. This chain is Highly reducing polyketide synthase, found in Eupenicillium brefeldianum (Penicillium brefeldianum).